The primary structure comprises 202 residues: Orotate phosphoribosyltransferase (202 aa).

5-phospho-alpha-D-ribose 1-diphosphate-binding positions include arginine 94, lysine 98, histidine 100, and 120–128; that span reads EDLISTGGS. Serine 124 lines the orotate pocket.

It belongs to the purine/pyrimidine phosphoribosyltransferase family. PyrE subfamily. In terms of assembly, homodimer. It depends on Mg(2+) as a cofactor.

The enzyme catalyses orotidine 5'-phosphate + diphosphate = orotate + 5-phospho-alpha-D-ribose 1-diphosphate. It participates in pyrimidine metabolism; UMP biosynthesis via de novo pathway; UMP from orotate: step 1/2. Catalyzes the transfer of a ribosyl phosphate group from 5-phosphoribose 1-diphosphate to orotate, leading to the formation of orotidine monophosphate (OMP). This is Orotate phosphoribosyltransferase from Staphylococcus haemolyticus (strain JCSC1435).